Consider the following 544-residue polypeptide: Histone-arginine methyltransferase CARMER (544 aa).

An SAM-dependent MTase PRMT-type domain is found at Ala150–His459. S-adenosyl-L-methionine contacts are provided by Gln163, Arg172, Gly196, Glu218, Glu247, and Thr275. Polar residues predominate over residues Asp505 to Leu520. Residues Asp505–Asn527 are disordered. Arg514 carries the post-translational modification Asymmetric dimethylarginine; by autocatalysis.

The protein belongs to the class I-like SAM-binding methyltransferase superfamily. Protein arginine N-methyltransferase family. As to quaternary structure, homodimer. The dimethylated protein is the major form.

It localises to the cytoplasm. The protein localises to the nucleus. It carries out the reaction L-arginyl-[protein] + 2 S-adenosyl-L-methionine = N(omega),N(omega)-dimethyl-L-arginyl-[protein] + 2 S-adenosyl-L-homocysteine + 2 H(+). In terms of biological role, methylates (mono- and asymmetric dimethylation) the guanidino nitrogens of arginyl residues in proteins. May methylate histone H3 at 'Arg-17' and activate transcription via chromatin remodeling. This is Histone-arginine methyltransferase CARMER (Art4) from Drosophila grimshawi (Hawaiian fruit fly).